The chain runs to 430 residues: Adenylosuccinate synthetase (430 aa).

Residues 12-18 (GDEGKGK) and 40-42 (GHT) contribute to the GTP site. Catalysis depends on Asp13, which acts as the Proton acceptor. Residues Asp13 and Gly40 each contribute to the Mg(2+) site. IMP is bound by residues 13 to 16 (DEGK), 38 to 41 (NAGH), Thr130, Arg144, Gln225, Thr240, and Arg304. His41 functions as the Proton donor in the catalytic mechanism. Residue 300–306 (STTGRPR) coordinates substrate. GTP is bound by residues Arg306, 332–334 (KLD), and 414–416 (SVG).

It belongs to the adenylosuccinate synthetase family. Homodimer. Mg(2+) is required as a cofactor.

The protein localises to the cytoplasm. The catalysed reaction is IMP + L-aspartate + GTP = N(6)-(1,2-dicarboxyethyl)-AMP + GDP + phosphate + 2 H(+). Its pathway is purine metabolism; AMP biosynthesis via de novo pathway; AMP from IMP: step 1/2. Functionally, plays an important role in the de novo pathway of purine nucleotide biosynthesis. Catalyzes the first committed step in the biosynthesis of AMP from IMP. This is Adenylosuccinate synthetase from Pelobacter propionicus (strain DSM 2379 / NBRC 103807 / OttBd1).